A 353-amino-acid polypeptide reads, in one-letter code: uncharacterized protein (353 aa).

An N-terminal signal peptide occupies residues Met-1–Ala-30.

In terms of assembly, monomer.

This is an uncharacterized protein from Escherichia coli (strain K12).